A 545-amino-acid chain; its full sequence is ATP synthase subunit alpha (545 aa).

172-179 lines the ATP pocket; that stretch reads GDRKTGKT.

Belongs to the ATPase alpha/beta chains family. As to quaternary structure, F-type ATPases have 2 components, CF(1) - the catalytic core - and CF(0) - the membrane proton channel. CF(1) has five subunits: alpha(3), beta(3), gamma(1), delta(1), epsilon(1). CF(0) has three main subunits: a(1), b(2) and c(9-12). The alpha and beta chains form an alternating ring which encloses part of the gamma chain. CF(1) is attached to CF(0) by a central stalk formed by the gamma and epsilon chains, while a peripheral stalk is formed by the delta and b chains.

The protein localises to the cell membrane. The catalysed reaction is ATP + H2O + 4 H(+)(in) = ADP + phosphate + 5 H(+)(out). Functionally, produces ATP from ADP in the presence of a proton gradient across the membrane. The alpha chain is a regulatory subunit. This Nocardia farcinica (strain IFM 10152) protein is ATP synthase subunit alpha.